A 66-amino-acid chain; its full sequence is Large ribosomal subunit protein bL35 (66 aa).

Residues 1-22 (MAYKLKSHRGAAKRFKKTASGG) are disordered.

It belongs to the bacterial ribosomal protein bL35 family.

The polypeptide is Large ribosomal subunit protein bL35 (Pseudoalteromonas translucida (strain TAC 125)).